The following is a 427-amino-acid chain: Enolase (427 aa).

Position 163 (Q163) interacts with (2R)-2-phosphoglycerate. Catalysis depends on E205, which acts as the Proton donor. The Mg(2+) site is built by D242, E285, and D312. The (2R)-2-phosphoglycerate site is built by K337, R366, S367, and K388. Catalysis depends on K337, which acts as the Proton acceptor.

It belongs to the enolase family. Requires Mg(2+) as cofactor.

Its subcellular location is the cytoplasm. The protein localises to the secreted. It localises to the cell surface. The catalysed reaction is (2R)-2-phosphoglycerate = phosphoenolpyruvate + H2O. The protein operates within carbohydrate degradation; glycolysis; pyruvate from D-glyceraldehyde 3-phosphate: step 4/5. In terms of biological role, catalyzes the reversible conversion of 2-phosphoglycerate (2-PG) into phosphoenolpyruvate (PEP). It is essential for the degradation of carbohydrates via glycolysis. The chain is Enolase from Burkholderia orbicola (strain MC0-3).